The primary structure comprises 596 residues: Aspartate--tRNA(Asp/Asn) ligase (596 aa).

Glu175 contributes to the L-aspartate binding site. The segment at 199–202 is aspartate; the sequence is QQYK. Positions 221 and 454 each coordinate L-aspartate. Position 221–223 (221–223) interacts with ATP; that stretch reads RDE. Glu488 serves as a coordination point for ATP. Arg495 provides a ligand contact to L-aspartate. 540-543 lines the ATP pocket; the sequence is GIDR.

This sequence belongs to the class-II aminoacyl-tRNA synthetase family. Type 1 subfamily. Homodimer.

The protein resides in the cytoplasm. The catalysed reaction is tRNA(Asx) + L-aspartate + ATP = L-aspartyl-tRNA(Asx) + AMP + diphosphate. Functionally, aspartyl-tRNA synthetase with relaxed tRNA specificity since it is able to aspartylate not only its cognate tRNA(Asp) but also tRNA(Asn). Reaction proceeds in two steps: L-aspartate is first activated by ATP to form Asp-AMP and then transferred to the acceptor end of tRNA(Asp/Asn). The chain is Aspartate--tRNA(Asp/Asn) ligase from Mesorhizobium japonicum (strain LMG 29417 / CECT 9101 / MAFF 303099) (Mesorhizobium loti (strain MAFF 303099)).